We begin with the raw amino-acid sequence, 481 residues long: Acyl-CoA ligase cnsG (481 aa).

The PTS2-type peroxisomal targeting signal signature appears at 3 to 11 (SPQLPPSMK). Residues 124–132 (KSGTTGNPK), 263–268 (NGYGMT), Asp353, and Arg368 each bind ATP. A substrate-binding site is contributed by Thr268. CoA is bound by residues 376 to 378 (GGL) and 446 to 448 (AIF). An ATP-binding site is contributed by Lys466.

The protein belongs to the ATP-dependent AMP-binding enzyme family.

It participates in alkaloid biosynthesis. In terms of biological role, acyl-CoA ligase; part of the gene cluster that mediates the biosynthesis of communesins, a prominent class of indole alkaloids with great potential as pharmaceuticals. Communesins are biosynthesized by the coupling of tryptamine and aurantioclavine, two building blocks derived from L-tryptophan. The L-tryptophan decarboxylase cnsB converts L-tryptophan to tryptamine, whereas the tryptophan dimethylallyltransferase cnsF converts L-tryptophan to 4-dimethylallyl tryptophan which is further transformed to aurantioclavine by the aurantioclavine synthase cnsA, probably aided by the catalase cnsD. The cytochrome P450 monooxygenase cnsC catalyzes the heterodimeric coupling between the two different indole moieties, tryptamine and aurantioclavine, to construct vicinal quaternary stereocenters and yield the heptacyclic communesin scaffold. The O-methyltransferase cnsE then methylates the communesin scaffold to produce communesin K, the simplest characterized communesin that contains the heptacyclic core. The dioxygenase cnsJ converts communesin K into communesin I. Acylation to introduce the hexadienyl group at position N16 of communesin I by the acyltransferase cnsK leads to the production of communesin B. The hexadienyl group is produced by the highly reducing polyketide synthase cnsI, before being hydrolytically removed from cnsI by the serine hydrolase cnsH, converted into hexadienyl-CoA by the CoA ligase cnsG, and then transferred to communesin I by cnsK. Surprisingly, cnsK may also be a promiscuous acyltransferase that can tolerate a range of acyl groups, including acetyl-, propionyl-, and butyryl-CoA, which lead to communesins A, G and H respectively. The roles of the alpha-ketoglutarate-dependent dioxygenases cnsM and cnsP have still to be determined. The polypeptide is Acyl-CoA ligase cnsG (Penicillium expansum (Blue mold rot fungus)).